Reading from the N-terminus, the 490-residue chain is Mitochondrial-processing peptidase subunit beta (490 aa).

Residues 1–46 (MAAAAVARAVLFSAARRRLCGFTERLLIGGAAGRSLYFGGNRLRST) constitute a mitochondrion transit peptide. H102 contributes to the Zn(2+) binding site. E105 acts as the Proton acceptor in catalysis. Zn(2+) is bound by residues H106 and E182.

The protein belongs to the peptidase M16 family. In terms of assembly, heterodimer of PMPCA (alpha) and PMPCB (beta) subunits, forming the mitochondrial processing protease (MPP) in which PMPCA is involved in substrate recognition and binding and PMPCB is the catalytic subunit. Requires Zn(2+) as cofactor.

It localises to the mitochondrion matrix. The enzyme catalyses Release of N-terminal transit peptides from precursor proteins imported into the mitochondrion, typically with Arg in position P2.. Binding to PMPCA is required for catalytic activity. Functionally, catalytic subunit of the essential mitochondrial processing protease (MPP), which cleaves the mitochondrial sequence off newly imported precursors proteins. Preferentially, cleaves after an arginine at position P2. Required for PINK1 turnover by coupling PINK1 mitochondrial import and cleavage, which results in subsequent PINK1 proteolysis. This chain is Mitochondrial-processing peptidase subunit beta (PMPCB), found in Bos taurus (Bovine).